Reading from the N-terminus, the 208-residue chain is Outer-membrane lipoprotein carrier protein (208 aa).

An N-terminal signal peptide occupies residues 1-22; it reads MKNLLCAVMLTSPLLYSTAVFA.

The protein belongs to the LolA family. As to quaternary structure, monomer.

It localises to the periplasm. Participates in the translocation of lipoproteins from the inner membrane to the outer membrane. Only forms a complex with a lipoprotein if the residue after the N-terminal Cys is not an aspartate (The Asp acts as a targeting signal to indicate that the lipoprotein should stay in the inner membrane). This chain is Outer-membrane lipoprotein carrier protein, found in Shewanella sp. (strain W3-18-1).